A 265-amino-acid polypeptide reads, in one-letter code: MPGFRFLLAATAAFLATSPALPLSADSLNAGNIRLVDPEETVPVIKIPDGIYLRTPNDPDDIIWARVPEFRVEMVMAPPVHPSVGLRYRDEYPEQDLVVQLARTSERFYVRLRWVDPTRDMSTLRDRFRDGAAIEFSESDDSVSYMMGTDAESPVNIWYWHPDGDRVESLAAGSPGSLTRLDRQPVTGASEYRTGHGPDDSQWIVVMSRPLASEGDHQVSFERDTIPVAFALWQGADAQRDGLKLVSLNWIFARMTPDAAPAPGN.

A signal peptide spans 1-25 (MPGFRFLLAATAAFLATSPALPLSA). Heme b-binding residues include H81 and M147.

Heterotrimer of alpha, beta and gamma subunits. Heme b serves as cofactor.

It is found in the periplasm. In terms of biological role, may transfer electrons to the iron-sulfur centers of DdhB. The chain is Dimethylsulfide dehydrogenase subunit gamma (ddhC) from Rhodovulum sulfidophilum (Rhodobacter sulfidophilus).